Consider the following 708-residue polypeptide: Metal-pseudopaline receptor CntO (708 aa).

The first 21 residues, 1–21, serve as a signal peptide directing secretion; sequence MRVSVSLVLGVGLGCSSPALW. The region spanning 63 to 169 is the TBDR plug domain; it reads RIEDIPQAIS…PGGTVNLVTK (107 aa). One can recognise a TBDR beta-barrel domain in the interval 174–708; the sequence is ERFARLHASA…NLTMSLTLNY (535 aa).

The protein belongs to the TonB-dependent receptor family.

It localises to the cell outer membrane. Functionally, transports the metallophore pseudopaline, which is involved in the acquisition of nickel and zinc, and thus enables bacterial growth inside the host, where metal access is limited. Is probably involved in the import of pseudopaline-metal complexes. The polypeptide is Metal-pseudopaline receptor CntO (Pseudomonas aeruginosa (strain UCBPP-PA14)).